A 196-amino-acid chain; its full sequence is Holliday junction branch migration complex subunit RuvA (196 aa).

The interval 1–65 is domain I; the sequence is MIGNLSGTVD…ENTTQLYGFI (65 aa). Residues 66-143 are domain II; it reads NKEEQSCLRL…KLETNNNNFY (78 aa). Residues 144–147 form a flexible linker region; sequence PINE. Positions 147-196 are domain III; it reads EDAVSALINLGYEKTKVYDTIKKYKPNLDTKDIIRTALKELSNYEIDIMQ.

It belongs to the RuvA family. Homotetramer. Forms an RuvA(8)-RuvB(12)-Holliday junction (HJ) complex. HJ DNA is sandwiched between 2 RuvA tetramers; dsDNA enters through RuvA and exits via RuvB. An RuvB hexamer assembles on each DNA strand where it exits the tetramer. Each RuvB hexamer is contacted by two RuvA subunits (via domain III) on 2 adjacent RuvB subunits; this complex drives branch migration. In the full resolvosome a probable DNA-RuvA(4)-RuvB(12)-RuvC(2) complex forms which resolves the HJ.

It localises to the cytoplasm. Functionally, the RuvA-RuvB-RuvC complex processes Holliday junction (HJ) DNA during genetic recombination and DNA repair, while the RuvA-RuvB complex plays an important role in the rescue of blocked DNA replication forks via replication fork reversal (RFR). RuvA specifically binds to HJ cruciform DNA, conferring on it an open structure. The RuvB hexamer acts as an ATP-dependent pump, pulling dsDNA into and through the RuvAB complex. HJ branch migration allows RuvC to scan DNA until it finds its consensus sequence, where it cleaves and resolves the cruciform DNA. The sequence is that of Holliday junction branch migration complex subunit RuvA from Wolbachia sp. subsp. Brugia malayi (strain TRS).